The following is a 458-amino-acid chain: Histidine--tRNA ligase (458 aa).

The protein belongs to the class-II aminoacyl-tRNA synthetase family. In terms of assembly, homodimer.

Its subcellular location is the cytoplasm. The catalysed reaction is tRNA(His) + L-histidine + ATP = L-histidyl-tRNA(His) + AMP + diphosphate + H(+). This is Histidine--tRNA ligase from Azobacteroides pseudotrichonymphae genomovar. CFP2.